The sequence spans 398 residues: tRNA pseudouridine synthase D (398 aa).

The active-site Nucleophile is the Asp-76. The TRUD domain occupies 151 to 360 (GVPNFFGEQR…MPGERRPLRI (210 aa)).

It belongs to the pseudouridine synthase TruD family.

It catalyses the reaction uridine(13) in tRNA = pseudouridine(13) in tRNA. Its function is as follows. Responsible for synthesis of pseudouridine from uracil-13 in transfer RNAs. The sequence is that of tRNA pseudouridine synthase D from Syntrophotalea carbinolica (strain DSM 2380 / NBRC 103641 / GraBd1) (Pelobacter carbinolicus).